The following is a 465-amino-acid chain: Ribulose bisphosphate carboxylase large chain (465 aa).

Lys-4 bears the N6,N6,N6-trimethyllysine mark. Asn-113 and Thr-163 together coordinate substrate. Lys-165 serves as the catalytic Proton acceptor. Lys-167 provides a ligand contact to substrate. Residues Lys-191, Asp-193, and Glu-194 each coordinate Mg(2+). N6-carboxylysine is present on Lys-191. Residue His-284 is the Proton acceptor of the active site. Substrate is bound by residues Arg-285, His-317, and Ser-369.

It belongs to the RuBisCO large chain family. Type I subfamily. Heterohexadecamer of 8 large chains and 8 small chains; disulfide-linked. The disulfide link is formed within the large subunit homodimers. It depends on Mg(2+) as a cofactor. Post-translationally, the disulfide bond which can form in the large chain dimeric partners within the hexadecamer appears to be associated with oxidative stress and protein turnover.

The protein resides in the plastid. The protein localises to the chloroplast. The catalysed reaction is 2 (2R)-3-phosphoglycerate + 2 H(+) = D-ribulose 1,5-bisphosphate + CO2 + H2O. It catalyses the reaction D-ribulose 1,5-bisphosphate + O2 = 2-phosphoglycolate + (2R)-3-phosphoglycerate + 2 H(+). Its function is as follows. RuBisCO catalyzes two reactions: the carboxylation of D-ribulose 1,5-bisphosphate, the primary event in carbon dioxide fixation, as well as the oxidative fragmentation of the pentose substrate in the photorespiration process. Both reactions occur simultaneously and in competition at the same active site. In Ailanthus altissima (Tree-of-heaven), this protein is Ribulose bisphosphate carboxylase large chain.